The sequence spans 299 residues: Tyrosine recombinase XerC (299 aa).

The region spanning 1–85 is the Core-binding (CB) domain; it reads MDQHLDAYCM…AVRGFYKYLN (85 aa). The Tyr recombinase domain occupies 106–285; that stretch reads RLPKTLDTDR…DFQHLATVYD (180 aa). Catalysis depends on residues arginine 146, lysine 170, histidine 237, arginine 240, and histidine 263. The O-(3'-phospho-DNA)-tyrosine intermediate role is filled by tyrosine 272.

It belongs to the 'phage' integrase family. XerC subfamily. In terms of assembly, forms a cyclic heterotetrameric complex composed of two molecules of XerC and two molecules of XerD.

The protein localises to the cytoplasm. Functionally, site-specific tyrosine recombinase, which acts by catalyzing the cutting and rejoining of the recombining DNA molecules. The XerC-XerD complex is essential to convert dimers of the bacterial chromosome into monomers to permit their segregation at cell division. It also contributes to the segregational stability of plasmids. The polypeptide is Tyrosine recombinase XerC (Pseudomonas syringae pv. syringae (strain B728a)).